A 305-amino-acid chain; its full sequence is UDP-3-O-acyl-N-acetylglucosamine deacetylase (305 aa).

Zn(2+) is bound by residues H78, H237, and D241. H264 (proton donor) is an active-site residue.

It belongs to the LpxC family. The cofactor is Zn(2+).

It carries out the reaction a UDP-3-O-[(3R)-3-hydroxyacyl]-N-acetyl-alpha-D-glucosamine + H2O = a UDP-3-O-[(3R)-3-hydroxyacyl]-alpha-D-glucosamine + acetate. The protein operates within glycolipid biosynthesis; lipid IV(A) biosynthesis; lipid IV(A) from (3R)-3-hydroxytetradecanoyl-[acyl-carrier-protein] and UDP-N-acetyl-alpha-D-glucosamine: step 2/6. In terms of biological role, catalyzes the hydrolysis of UDP-3-O-myristoyl-N-acetylglucosamine to form UDP-3-O-myristoylglucosamine and acetate, the committed step in lipid A biosynthesis. This Cupriavidus necator (strain ATCC 17699 / DSM 428 / KCTC 22496 / NCIMB 10442 / H16 / Stanier 337) (Ralstonia eutropha) protein is UDP-3-O-acyl-N-acetylglucosamine deacetylase.